The sequence spans 248 residues: Prepilin leader peptidase/N-methyltransferase (248 aa).

The helical transmembrane segment at 1-21 threads the bilayer; the sequence is MLSILFIFGLILGSFYYTAGC. C36, C39, C61, and C64 together coordinate Zn(2+). 6 helical membrane passes run 68–88, 90–110, 114–134, 143–163, 178–198, and 223–243; these read ISFMYPAAELVTACLFAAAGI, FGISLELFPAVVFISLLIIVA, IHFMLIPNRILIFFLPFLAAA, WYAGLLGAAAGFLFLAVIAAI, VIGFVLGVKMLAAAFFFSVLI, and AIAAGSILAYLYGDSIISFYI.

The protein belongs to the peptidase A24 family. Requires Zn(2+) as cofactor.

It localises to the cell membrane. It catalyses the reaction Typically cleaves a -Gly-|-Phe- bond to release an N-terminal, basic peptide of 5-8 residues from type IV prepilin, and then N-methylates the new N-terminal amino group, the methyl donor being S-adenosyl-L-methionine.. Its function is as follows. Plays a role in type II pseudopili formation by proteolytically removing the leader sequence from substrate proteins and subsequently monomethylating the alpha-amino group of the newly exposed N-terminal phenylalanine. Substrates include proteins required for biogenesis of the type II general secretory apparatus. In Bacillus subtilis (strain 168), this protein is Prepilin leader peptidase/N-methyltransferase (comC).